Here is a 118-residue protein sequence, read N- to C-terminus: Large ribosomal subunit protein bL20 (118 aa).

This sequence belongs to the bacterial ribosomal protein bL20 family.

In terms of biological role, binds directly to 23S ribosomal RNA and is necessary for the in vitro assembly process of the 50S ribosomal subunit. It is not involved in the protein synthesizing functions of that subunit. This chain is Large ribosomal subunit protein bL20, found in Pseudomonas syringae pv. syringae (strain B728a).